A 240-amino-acid chain; its full sequence is Transmembrane protein 65 (240 aa).

Residues 1 to 61 (MSRLLPLLRS…RRLGTHPKKE (61 aa)) constitute a mitochondrion transit peptide. Topologically, residues 62-110 (PMEALNTAQGARDFIYSLHSTERSCLLKELHRFESIAIAQEKLEAPPPT) are cytoplasmic. The helical transmembrane segment at 111 to 131 (PGQLRYVFIHNAIPFIGFGFL) threads the bilayer. Residues 132–142 (DNAIMIVAGTH) lie on the Extracellular side of the membrane. Residues 143 to 165 (IEMSIGIILGISTMAAAALGNLV) traverse the membrane as a helical segment. Topologically, residues 166–209 (SDLAGLGLAGYVEALASRLGLSIPDLTPKQVDMWQTRLSTHLGK) are cytoplasmic. Residues 210–230 (AVGVTIGCILGMFPLIFFGGG) form a helical membrane-spanning segment. Over 231–240 (EEDEKLETKS) the chain is Extracellular.

As to quaternary structure, monomer. Homodimer. Interacts with GJA1. Interacts weakly with DSP. Interacts with SCN1B. Predominantly expressed the ventricular tissue (at protein level).

Its subcellular location is the cell membrane. The protein localises to the mitochondrion inner membrane. In terms of biological role, essential for maintaining proper cardiac intercalated disk (ICD) structure and function as well as cardiac conduction velocity in the heart. Its association with SCN1B is required for stabilizing the perinexus in the ICD and for localization of GJA1 and SCN5A to the ICD. May regulate the function of the gap junction protein GJA1 and may contribute to the stability and proper localization of GJA1 to cardiac intercalated disk thereby regulating gap junction communication. May also play a role in the regulation of mitochondrial respiration and mitochondrial DNA copy number maintenance. This chain is Transmembrane protein 65 (TMEM65), found in Homo sapiens (Human).